Here is a 109-residue protein sequence, read N- to C-terminus: uncharacterized protein (109 aa).

This is an uncharacterized protein from Caenorhabditis elegans.